We begin with the raw amino-acid sequence, 279 residues long: Four and a half LIM domains protein 2 (279 aa).

Residues 7–31 form a C4-type zinc finger; the sequence is CHHCEDSLFGRKYVLREEQPYCVAC. LIM zinc-binding domains are found at residues 40-92, 101-153, and 162-212; these read CEEC…CTDC, CQEC…CVPC, and CVQC…CLGC. Lys-78 participates in a covalent cross-link: Glycyl lysine isopeptide (Lys-Gly) (interchain with G-Cter in SUMO2). Residues Lys-167 and Lys-220 each participate in a glycyl lysine isopeptide (Lys-Gly) (interchain with G-Cter in SUMO2) cross-link. Positions 221–275 constitute an LIM zinc-binding 4 domain; it reads CAGCANPISGLGGTKYISFEERQWHNDCFNCKKCSLSLVGRGFLTERDDILCPDC. Position 238 is a phosphoserine (Ser-238).

Interacts with ZNF638 and TTN/titin. Interacts with E4F1. Interacts with GRB7. Interacts with SIRT1 and FOXO1. Interacts with CEFIP and calcineurin. Interacts with FOXK1.

The protein localises to the cytoplasm. The protein resides in the nucleus. Its subcellular location is the myofibril. It is found in the sarcomere. It localises to the z line. May function as a molecular transmitter linking various signaling pathways to transcriptional regulation. Negatively regulates the transcriptional repressor E4F1 and may function in cell growth. Inhibits the transcriptional activity of FOXO1 and its apoptotic function by enhancing the interaction of FOXO1 with SIRT1 and FOXO1 deacetylation. Negatively regulates the calcineurin/NFAT signaling pathway in cardiomyocytes. The chain is Four and a half LIM domains protein 2 (FHL2) from Bos taurus (Bovine).